The sequence spans 328 residues: Malate dehydrogenase (328 aa).

Residue 11–17 (GAAGQIG) coordinates NAD(+). Substrate-binding residues include Arg-94 and Arg-100. NAD(+) is bound by residues Asn-107, Gln-114, and 131–133 (VGN). Substrate contacts are provided by Asn-133 and Arg-164. His-189 acts as the Proton acceptor in catalysis.

It belongs to the LDH/MDH superfamily. MDH type 2 family.

The catalysed reaction is (S)-malate + NAD(+) = oxaloacetate + NADH + H(+). Catalyzes the reversible oxidation of malate to oxaloacetate. In Xanthomonas campestris pv. campestris (strain 8004), this protein is Malate dehydrogenase.